A 139-amino-acid polypeptide reads, in one-letter code: Ribonuclease P protein component (139 aa).

This sequence belongs to the RnpA family. In terms of assembly, consists of a catalytic RNA component (M1 or rnpB) and a protein subunit.

It catalyses the reaction Endonucleolytic cleavage of RNA, removing 5'-extranucleotides from tRNA precursor.. Its function is as follows. RNaseP catalyzes the removal of the 5'-leader sequence from pre-tRNA to produce the mature 5'-terminus. It can also cleave other RNA substrates such as 4.5S RNA. The protein component plays an auxiliary but essential role in vivo by binding to the 5'-leader sequence and broadening the substrate specificity of the ribozyme. The polypeptide is Ribonuclease P protein component (Chlamydia felis (strain Fe/C-56) (Chlamydophila felis)).